Here is a 388-residue protein sequence, read N- to C-terminus: Trans-enoyl reductase tenC (388 aa).

51–54 is an NADP(+) binding site; sequence VDGK. Position 142 to 149 (142 to 149) interacts with substrate; it reads VGIASVGM. NADP(+)-binding positions include 219–222, Tyr237, and 284–285; these read SSES and LD. Position 304-308 (304-308) interacts with substrate; the sequence is SFTQF. Residue 373 to 374 coordinates NADP(+); that stretch reads IK.

The protein belongs to the zinc-containing alcohol dehydrogenase family. Monomer.

It participates in secondary metabolite biosynthesis. Its function is as follows. Trans-enoyl reductase; part of the gene cluster that mediates the biosynthesis of tenellin-type 2-pyridones, iron-chelating compounds involved in iron stress tolerance, competition with the natural competitor fungus Metarhizium robertsii and insect hosts infection. TenC collaborates with the hybrid PKS-NRPS synthetase tenS to catalyze the assembly of the polyketide-amino acid backbone, since tenS lacks a designated enoylreductase (ER) domain. Upon formation of the polyketide backbone on the thiotemplate of tenS, the triketide is transferred to the NRPS module and linked to tyrosine to produce the pyrrolidine-2-dione intermediates, including pretellinin A, 11-hydropretellenin A, 12-hydropretellenin A, 13-hydropretellenin A, 14-hydropretellenin A, 12-oxopretellenin A and prototellinin D. The pathway begins with the assembly of the polyketide-amino acid backbone by the hybrid PKS-NRPS tenS with the help of the enoyl reductase tenC. These enzymes catalyze the synthesis of the pyrrolidine-2-dione intermediates pretellinin A, 11-hydropretellenin A, 12-hydropretellenin A, 13-hydropretellenin A, 14-hydropretellenin A, 12-oxopretellenin A and prototellinin D. The cytochrome P450 monooxygenase tenA then catalyzes an oxidative ring expansion of pretenellin A and 14-hydropretellenin A to form the 2-pyridone core, leading to pretenellin B and pyridovericin, respectively. The cytochrome P450 monooxygenase tenB is then required for the selective N-hydroxylation of the 2-pyridone nitrogen of yield tellinin and 15-hydroxytellenin (15-HT), respectively. The UDP-glucosyltransferase GT1 and the methyltransferase MT1, located outside the tenS gene cluster, contribute to the stepwise glycosylation and methylation of 15-HT to obtain the glycoside pyridovericin-N-O-(4-O-methyl-beta-D-glucopyranoside) (PMGP). Additional related compounds such as 1-O-methyl-15-HT, (8Z)-1-O-methyl-15-HT, and O-methyltenellin A are also produced but the enzymes involved in their biosynthesis have still to be determined. The sequence is that of Trans-enoyl reductase tenC from Beauveria bassiana (strain ARSEF 2860) (White muscardine disease fungus).